Reading from the N-terminus, the 776-residue chain is Probable exo-1,4-beta-xylosidase bxlB (776 aa).

A signal peptide spans 1–23 (MVHLSPLLRPLAAFSFFTSLAST). 2 N-linked (GlcNAc...) asparagine glycosylation sites follow: Asn65 and Asn105. Asp291 is an active-site residue. Asn343, Asn410, Asn421, Asn462, Asn623, and Asn766 each carry an N-linked (GlcNAc...) asparagine glycan.

It belongs to the glycosyl hydrolase 3 family.

It is found in the secreted. The catalysed reaction is Hydrolysis of (1-&gt;4)-beta-D-xylans, to remove successive D-xylose residues from the non-reducing termini.. It participates in glycan degradation; xylan degradation. Functionally, xylan 1,4-beta-xylosidase involved in the hydrolysis of xylan, a major structural heterogeneous polysaccharide found in plant biomass representing the second most abundant polysaccharide in the biosphere, after cellulose. The polypeptide is Probable exo-1,4-beta-xylosidase bxlB (bxlB) (Aspergillus flavus (strain ATCC 200026 / FGSC A1120 / IAM 13836 / NRRL 3357 / JCM 12722 / SRRC 167)).